A 582-amino-acid polypeptide reads, in one-letter code: Membrane-bound O-acyltransferase GUP1 (582 aa).

Residues 1–61 (MVIPRYHLIP…IIKQANPKSR (61 aa)) lie on the Extracellular side of the membrane. Residues 62 to 82 (WSTIEFKFYYLVFLIIVPLMF) form a helical membrane-spanning segment. The Cytoplasmic segment spans residues 83 to 121 (KAGMESANENNPNYPKYEHLLSNGWIFGRKVDNSDQQYR). Residues 122 to 144 (FFRNNFPLLCLLIIIHVGLRRVI) traverse the membrane as a helical segment. Residues 145–158 (NRIIPLSSKRTYFD) lie on the Extracellular side of the membrane. Residues 159 to 179 (FIFGIIFLIGAHGVNVLKLSI) form a helical membrane-spanning segment. At 180–195 (HLLINYLIGKYIKNYK) the chain is on the cytoplasmic side. Residues 196 to 216 (LSLWITWIYGISSLFFNEWYG) traverse the membrane as a helical segment. Residues 217–294 (NYTLGLSFLS…TAPLPIEDYN (78 aa)) lie on the Extracellular side of the membrane. Residues 295-315 (IFNYISYLTYTPLFIAGPILT) traverse the membrane as a helical segment. At 316-343 (FNDYIYQSNYQQSSSTKDYHRIMMYLIR) the chain is on the cytoplasmic side. The chain crosses the membrane as a helical span at residues 344–364 (FIFCLLTLEFILHFMYVVAAS). Residues 365-373 (KTKSWEGNL) are Extracellular-facing. A helical transmembrane segment spans residues 374-394 (PFQISMLGMFNLNIIWLKLLI). Over 395–454 (PWRLFRLWSLLDGIDPPENMIRCMDNNFSALAFWRAWHRSYNRWIIRYIYLPMGGGGKYR) the chain is Cytoplasmic. 2 consecutive transmembrane segments (helical) span residues 455-475 (ILNS…ELKL) and 476-496 (LMWG…TMIF). Residue histidine 469 is part of the active site. The Cytoplasmic portion of the chain corresponds to 497–507 (KKYRNQWWYRH). A helical membrane pass occupies residues 508-528 (LCGVGAVINIWMMMIANLVGF). Topologically, residues 529 to 548 (CLGTDGMWKLLHDLFKTFDG) are extracellular. A helical transmembrane segment spans residues 549–569 (VRFLIISSGALFVGAQIMFEI). Residues 570-582 (RESEMRKGINVRC) are Cytoplasmic-facing.

This sequence belongs to the membrane-bound acyltransferase family.

Its subcellular location is the cell membrane. It is found in the endoplasmic reticulum membrane. The protein resides in the mitochondrion membrane. Functionally, membrane-bound O-acyltransferase involved in the remodeling of glycosylphosphatidylinositol (GPI) anchors. Acts only on GPI-anchored proteins, but not on free GPI lipids. Also involved in lipid metabolism, having profound effects on sphingolipid-sterol-ordered domains integrity and assembly. Involved in cell integrity and apoptosis. In Candida tropicalis (Yeast), this protein is Membrane-bound O-acyltransferase GUP1 (GUP1).